Reading from the N-terminus, the 613-residue chain is RUN domain-containing protein 1 (613 aa).

The disordered stretch occupies residues 15–36; the sequence is AAVGPKAKDEEEEEEEPLPPCE. Residue T54 is modified to Phosphothreonine. Positions 57-69 are enriched in low complexity; sequence LEEATAEEPGAAP. Disordered stretches follow at residues 57–79, 140–177, and 305–330; these read LEEA…PGRT, YEGP…RLET, and GKTG…KAED. Phosphoserine is present on residues S71 and S75. A compositionally biased stretch (basic and acidic residues) spans 159–177; that stretch reads PWLRGEDQSEQEKQERLET. A coiled-coil region spans residues 160 to 235; the sequence is WLRGEDQSEQ…IKKLDMNLNE (76 aa). The span at 309-325 shows a compositional bias: polar residues; that stretch reads NGCSRTGSSRTPPGNSK. Residues 421-602 enclose the RUN domain; sequence ELTMAVRKEL…LKFSLPVDLA (182 aa). S497 is modified (phosphoserine).

In terms of biological role, may play a role as p53/TP53 inhibitor and thus may have oncogenic activity. In Homo sapiens (Human), this protein is RUN domain-containing protein 1 (RUNDC1).